Consider the following 114-residue polypeptide: Large ribosomal subunit protein bL20c (114 aa).

It belongs to the bacterial ribosomal protein bL20 family.

It localises to the plastid. It is found in the cyanelle. In terms of biological role, binds directly to 23S ribosomal RNA and is necessary for the in vitro assembly process of the 50S ribosomal subunit. It is not involved in the protein synthesizing functions of that subunit. This is Large ribosomal subunit protein bL20c (rpl20) from Cyanophora paradoxa.